Consider the following 55-residue polypeptide: Protein CADMIUM TOLERANCE 1 (55 aa).

The chain crosses the membrane as a helical span at residues 24 to 40; that stretch reads GCLYACIFTALCCFCCY.

This sequence belongs to the CYSTM1 family. Expressed in roots and shoots.

The protein localises to the cell membrane. It localises to the secreted. The protein resides in the cell wall. Functionally, confers resistance to heavy metal ions (e.g. cadmium (CdCl(2)) and copper (CuCl(2))) by chelating them at the plasma membrane of root cells, thus stopping their entry and reducing their accumulation. Binds to aluminium (Al). The polypeptide is Protein CADMIUM TOLERANCE 1 (Oryza sativa subsp. japonica (Rice)).